The following is a 456-amino-acid chain: DEAD-box ATP-dependent RNA helicase 10 (456 aa).

A Q motif motif is present at residues 9–37 (KTFAELGVREELVKACERLGWKNPSKIQA). The Helicase ATP-binding domain maps to 40–223 (LPFALEGKDV…RACLRNPVKI (184 aa)). 53–60 (AQTGSGKT) is an ATP binding site. The DEAD box signature appears at 171–174 (DEAD). In terms of domain architecture, Helicase C-terminal spans 250 to 394 (YLVYILSEMP…EYPAEEDEVL (145 aa)). The disordered stretch occupies residues 407–456 (SAMNMKESGGRKRRGEDDEESERFLGGNKDRGNKERGGNKDKKSSKKFKR). Residues 434 to 448 (NKDRGNKERGGNKDK) show a composition bias toward basic and acidic residues.

The protein belongs to the DEAD box helicase family. DDX47/RRP3 subfamily. As to expression, expressed in all tissues and organs examined including root, cotyledon, first and second leaves, third and fourth leaves, fifth and sixth leaves, shoot apex, flower, flower bud, cauline leaf and rosette leaves.

The protein localises to the nucleus. Its subcellular location is the nucleolus. The enzyme catalyses ATP + H2O = ADP + phosphate + H(+). Functionally, involved in leaf polarity establishment by functioning cooperatively with AS2 to repress abaxial genes ARF3, ARF4, KAN1, KAN2, YAB1 and YAB5, and the knox homeobox genes KNAT1, KNAT2, KNAT6, and STM to promote adaxial development in leaf primordia at shoot apical meristems at high temperatures. Involved in the processing of pre-rRNA intermediates at high temperatures. This is DEAD-box ATP-dependent RNA helicase 10 (RH10) from Arabidopsis thaliana (Mouse-ear cress).